The primary structure comprises 142 residues: SLSTKDKAVVKGFWSKISGKSDEIGTEAVGRMLTVYPQTKAYFSHWPETTPGSAPVKKHGARILGAINDAVNRIDDMAGALGSLSELHANKLCVDPANFKILAHCLMASICLFYPTDFTPEVHLSVDKFLQNLALALADRYR.

An N-acetylserine modification is found at serine 1. Residues 1 to 142 (SLSTKDKAVV…LALALADRYR (142 aa)) form the Globin domain. Residue histidine 59 coordinates O2. Position 88 (histidine 88) interacts with heme b.

This sequence belongs to the globin family. Heterotetramer of two alpha chains and two beta chains. In terms of tissue distribution, red blood cells.

In terms of biological role, involved in oxygen transport from gills to the various peripheral tissues. This chain is Hemoglobin anodic subunit alpha, found in Gymnothorax unicolor (Brown moray).